The following is a 152-amino-acid chain: 2-C-methyl-D-erythritol 2,4-cyclodiphosphate synthase (152 aa).

Residues Asp8 and His10 each contribute to the a divalent metal cation site. Residues 8 to 10 (DSH) and 34 to 35 (HS) contribute to the 4-CDP-2-C-methyl-D-erythritol 2-phosphate site. His42 contacts a divalent metal cation. Residues 56 to 58 (DIG) and 61 to 65 (FPDTD) contribute to the 4-CDP-2-C-methyl-D-erythritol 2-phosphate site.

Belongs to the IspF family. In terms of assembly, homotrimer. A divalent metal cation is required as a cofactor.

It catalyses the reaction 4-CDP-2-C-methyl-D-erythritol 2-phosphate = 2-C-methyl-D-erythritol 2,4-cyclic diphosphate + CMP. Its pathway is isoprenoid biosynthesis; isopentenyl diphosphate biosynthesis via DXP pathway; isopentenyl diphosphate from 1-deoxy-D-xylulose 5-phosphate: step 4/6. Functionally, involved in the biosynthesis of isopentenyl diphosphate (IPP) and dimethylallyl diphosphate (DMAPP), two major building blocks of isoprenoid compounds. Catalyzes the conversion of 4-diphosphocytidyl-2-C-methyl-D-erythritol 2-phosphate (CDP-ME2P) to 2-C-methyl-D-erythritol 2,4-cyclodiphosphate (ME-CPP) with a corresponding release of cytidine 5-monophosphate (CMP). This Thermus thermophilus (strain ATCC BAA-163 / DSM 7039 / HB27) protein is 2-C-methyl-D-erythritol 2,4-cyclodiphosphate synthase.